The primary structure comprises 570 residues: Urease subunit alpha (570 aa).

The Urease domain maps to 131–570 (GGMDSHIHFI…LPMAQRYFLF (440 aa)). Residues histidine 136, histidine 138, and lysine 219 each coordinate Ni(2+). At lysine 219 the chain carries N6-carboxylysine. Histidine 221 is a binding site for substrate. Ni(2+) contacts are provided by histidine 248 and histidine 274. Histidine 322 (proton donor) is an active-site residue. Aspartate 362 contacts Ni(2+).

This sequence belongs to the metallo-dependent hydrolases superfamily. Urease alpha subunit family. In terms of assembly, heterotrimer of UreA (gamma), UreB (beta) and UreC (alpha) subunits. Three heterotrimers associate to form the active enzyme. It depends on Ni cation as a cofactor. Carboxylation allows a single lysine to coordinate two nickel ions.

The protein resides in the cytoplasm. It catalyses the reaction urea + 2 H2O + H(+) = hydrogencarbonate + 2 NH4(+). It functions in the pathway nitrogen metabolism; urea degradation; CO(2) and NH(3) from urea (urease route): step 1/1. This Rhizobium johnstonii (strain DSM 114642 / LMG 32736 / 3841) (Rhizobium leguminosarum bv. viciae) protein is Urease subunit alpha.